A 242-amino-acid chain; its full sequence is MGRGRVQLKRIENKINRQVTFSKRRSGLLKKAHEISVLCDAEVALIVFSSKGKLFEYSTDSCMERILERYDRYLYSDKQLVGRDVSQSENWVLEHAKLKARVEVLEKNKRNFMGEDLDSLSLKELQSLEHQLDAAIKSIRSRKNQAMFESISALQKKDKALQDHNNSLLKKIKEREKKTGQQEGQLVQCSNSSSVLLPQYCVTSSRDGFVERVGGENGGASSLTEPNSLLPAWMLRPTTTNE.

The 55-residue stretch at 3-57 folds into the MADS-box domain; that stretch reads RGRVQLKRIENKINRQVTFSKRRSGLLKKAHEISVLCDAEVALIVFSSKGKLFEY. The 91-residue stretch at 88–178 folds into the K-box domain; sequence SENWVLEHAK…LKKIKEREKK (91 aa). Residues 89–178 are a coiled coil; that stretch reads ENWVLEHAKL…LKKIKEREKK (90 aa).

In terms of assembly, homodimer capable of binding to CArG-box sequences. Vascular tissue of cauline leaves, floral shoot apex and valves of carpels and fruits.

It localises to the nucleus. Probable transcription factor that promotes early floral meristem identity in synergy with APETALA1 and CAULIFLOWER. Is required subsequently for the transition of an inflorescence meristem into a floral meristem. Seems to be partially redundant to the function of APETALA1 and CAULIFLOWER in the up-regulation of LEAFY. Is also required for normal pattern of cell division, expansion and differentiation during morphogenesis of the silique. Probably not required for fruit elongation but instead is required to prevent ectopic activity of IND. Represses SAUR10 expression in stems and inflorescence branches. The chain is Agamous-like MADS-box protein AGL8 (AGL8) from Arabidopsis thaliana (Mouse-ear cress).